The following is a 440-amino-acid chain: Xylose isomerase (440 aa).

Catalysis depends on residues His-100 and Asp-103. Positions 231, 267, 270, 295, 306, 308, and 338 each coordinate Mg(2+).

This sequence belongs to the xylose isomerase family. In terms of assembly, homotetramer. Requires Mg(2+) as cofactor.

The protein localises to the cytoplasm. It catalyses the reaction alpha-D-xylose = alpha-D-xylulofuranose. The protein is Xylose isomerase of Burkholderia cenocepacia (strain HI2424).